The chain runs to 230 residues: Sugar fermentation stimulation protein homolog (230 aa).

It belongs to the SfsA family.

The chain is Sugar fermentation stimulation protein homolog from Clostridium botulinum (strain ATCC 19397 / Type A).